Consider the following 241-residue polypeptide: Agamous-like MADS-box protein AGL9 homolog (241 aa).

The MADS-box domain maps to 3-57 (RGRVELKRIENKINRQVTFAKRRNGLLKKAYELSVLCDAEVALIIFSNRGKLYEF). The region spanning 89 to 179 (EISSQQEYLK…KQRLMEGSTL (91 aa)) is the K-box domain.

The protein resides in the nucleus. In terms of biological role, probable transcription factor. The chain is Agamous-like MADS-box protein AGL9 homolog (FBP2) from Petunia hybrida (Petunia).